A 399-amino-acid polypeptide reads, in one-letter code: Ribose-phosphate pyrophosphokinase 2, chloroplastic (399 aa).

The transit peptide at 1 to 32 (MAAKAAALSSSPFVSSRRLSSPAASLRARTPR) directs the protein to the chloroplast. 4 residues coordinate Mg(2+): D214, H216, D225, and D229. The interval 299 to 314 (GKVAIMVDDMIDTAGT) is binding of phosphoribosylpyrophosphate.

This sequence belongs to the ribose-phosphate pyrophosphokinase family. Requires Mg(2+) as cofactor.

The protein localises to the plastid. It localises to the chloroplast. It carries out the reaction D-ribose 5-phosphate + ATP = 5-phospho-alpha-D-ribose 1-diphosphate + AMP + H(+). The protein is Ribose-phosphate pyrophosphokinase 2, chloroplastic of Oryza sativa subsp. japonica (Rice).